Here is a 59-residue protein sequence, read N- to C-terminus: U17-myrmicitoxin-Tb1f (59 aa).

The N-terminal stretch at 1 to 27 is a signal peptide; that stretch reads MEKNRTTTFSVYLTIILFLISTFITMV. Positions 28–31 are excised as a propeptide; that stretch reads ITES. A Histidine amide modification is found at His-58.

In terms of tissue distribution, expressed by the venom gland.

The protein localises to the secreted. In Tetramorium bicarinatum (Tramp ant), this protein is U17-myrmicitoxin-Tb1f.